Here is a 352-residue protein sequence, read N- to C-terminus: MNPLTQVKNLQKINARESDLGISDEASWHAKYKNSAYVYVGGIPFDLTEGDLLAVFSQYGEIVDVNLIRDKGTGKSKGFAFLAYEDQRSTILAVDNLNGALVLGRTIKVDHCGAYKKHEEEDEETRRQNREARGVCRAFQRGECTRGDSCKFSHDEKRAANTGWGHEEDRSSKWDHDKNREGRGVCRAFQRGECTRGDSCKFSHDEKRAATTGWGHEEDRSSKWDQDKLNGAKKGGTSFGNRGDFKPDVEEKSYRGRGDGDASYGRPKERERVDREDMGPRSRDAYDMKEQKRSGRYDNAYSRRHNDEIDYVREDKGSRAQDWEKRKAESRRDRNDREEKDRDSLRREDRRR.

The 79-residue stretch at alanine 36 to alanine 114 folds into the RRM domain. 2 consecutive C3H1-type zinc fingers follow at residues arginine 130–lysine 157 and arginine 180–lysine 207. The tract at residues glutamate 156 to asparagine 179 is disordered. Composition is skewed to basic and acidic residues over residues alanine 210 to asparagine 230, glycine 243 to arginine 296, and arginine 304 to arginine 352. The tract at residues alanine 210–arginine 352 is disordered. Positions arginine 319–glutamate 348 form a coiled coil.

The protein is Zinc finger CCCH domain-containing protein 42 of Arabidopsis thaliana (Mouse-ear cress).